Consider the following 365-residue polypeptide: Isoflavone 4'-O-methyltransferase (365 aa).

Residues 207–210, Asp-231, 231–232, 251–252, and Lys-265 each bind S-adenosyl-L-methionine; these read VAGG, DQ, and DM. Residue His-269 is the Proton acceptor of the active site.

Belongs to the class I-like SAM-binding methyltransferase superfamily. Cation-independent O-methyltransferase family. COMT subfamily.

It catalyses the reaction a 4'-hydroxyisoflavone + S-adenosyl-L-methionine = a 4'-methoxyisoflavone + S-adenosyl-L-homocysteine + H(+). The catalysed reaction is (2R,3S)-2,4',7-trihydroxyisoflavanone + S-adenosyl-L-methionine = (2R,3S)-2,7-dihydroxy-4'-methoxyisoflavanone + S-adenosyl-L-homocysteine + H(+). 2-hydroxyisoflavanone 4'-O-methyltransferase involved in the biosynthesis of formononetin. Can use 2,7,4'-trihydroxyisoflavanone as substrate, but not daidzein. The chain is Isoflavone 4'-O-methyltransferase (HI4'OMT) from Lotus japonicus (Lotus corniculatus var. japonicus).